The chain runs to 382 residues: Protein arginine N-methyltransferase PRMT10 (382 aa).

The interval 1–21 is disordered; it reads MASLPNGAASASAASSAAGGG. Over residues 7-17 the composition is skewed to low complexity; sequence GAASASAASSA. Residues 28–359 form the SAM-dependent MTase PRMT-type domain; that stretch reads EVDFANYFCT…KENHRLMDME (332 aa). Catalysis depends on residues E142 and E151. Residues 189–229 form a dimerization arm region; sequence ENKMEDLEIAMHDWNLFVEDTESYYGVNMNVLTKAYRAEHE.

This sequence belongs to the class I-like SAM-binding methyltransferase superfamily. Protein arginine N-methyltransferase family. Ring-like homodimer.

The catalysed reaction is L-arginyl-[protein] + 2 S-adenosyl-L-methionine = N(omega),N(omega)-dimethyl-L-arginyl-[protein] + 2 S-adenosyl-L-homocysteine + 2 H(+). Its function is as follows. Methylates (mono and asymmetric dimethylation) the guanidino nitrogens of arginyl residues in some proteins. This is Protein arginine N-methyltransferase PRMT10 (PRMT10) from Oryza sativa subsp. indica (Rice).